The sequence spans 500 residues: Probable cytosol aminopeptidase (500 aa).

The Mn(2+) site is built by K268 and D273. K280 is an active-site residue. Mn(2+)-binding residues include D291, D350, and E352. The active site involves R354.

This sequence belongs to the peptidase M17 family. Mn(2+) is required as a cofactor.

It localises to the cytoplasm. The catalysed reaction is Release of an N-terminal amino acid, Xaa-|-Yaa-, in which Xaa is preferably Leu, but may be other amino acids including Pro although not Arg or Lys, and Yaa may be Pro. Amino acid amides and methyl esters are also readily hydrolyzed, but rates on arylamides are exceedingly low.. It catalyses the reaction Release of an N-terminal amino acid, preferentially leucine, but not glutamic or aspartic acids.. Presumably involved in the processing and regular turnover of intracellular proteins. Catalyzes the removal of unsubstituted N-terminal amino acids from various peptides. The protein is Probable cytosol aminopeptidase of Azoarcus sp. (strain BH72).